Here is a 550-residue protein sequence, read N- to C-terminus: Glucose-6-phosphate isomerase (550 aa).

The Proton donor role is filled by E356. Active-site residues include H387 and K515.

The protein belongs to the GPI family.

The protein resides in the cytoplasm. The catalysed reaction is alpha-D-glucose 6-phosphate = beta-D-fructose 6-phosphate. It functions in the pathway carbohydrate biosynthesis; gluconeogenesis. The protein operates within carbohydrate degradation; glycolysis; D-glyceraldehyde 3-phosphate and glycerone phosphate from D-glucose: step 2/4. In terms of biological role, catalyzes the reversible isomerization of glucose-6-phosphate to fructose-6-phosphate. The chain is Glucose-6-phosphate isomerase from Syntrophobacter fumaroxidans (strain DSM 10017 / MPOB).